The chain runs to 342 residues: P2Y purinoceptor 12 (342 aa).

Over 1-27 the chain is Extracellular; it reads MQAVDNLTSAPGNTSLCTRDYKITQVL. Asparagine 6 and asparagine 13 each carry an N-linked (GlcNAc...) asparagine glycan. Disulfide bonds link cysteine 17–cysteine 270 and cysteine 97–cysteine 175. Residues 28–50 form a helical membrane-spanning segment; sequence FPLLYTVLFFVGLITNGLAMRIF. Topologically, residues 51-61 are cytoplasmic; it reads FQIRSKSNFII. Serine 55 and serine 57 each carry phosphoserine. A helical membrane pass occupies residues 62–82; the sequence is FLKNTVISDLLMILTFPFKIL. Over 83 to 97 the chain is Extracellular; sequence SDAKLGTGPLRTFVC. ADP-binding residues include arginine 93, cysteine 97, and tyrosine 105. A helical membrane pass occupies residues 98-118; that stretch reads QVTSVIFYFTMYISISFLGLI. The Cytoplasmic portion of the chain corresponds to 119 to 142; the sequence is TIDRYQKTTRPFKTSNPKNLLGAK. The helical transmembrane segment at 143 to 162 threads the bilayer; it reads ILSVVIWAFMFLLSLPNMIL. ADP contacts are provided by residues 156 to 159, 175 to 179, histidine 187, and asparagine 191; these read SLPN and CSFLK. Topologically, residues 163–185 are extracellular; the sequence is TNRQPRDKNVKKCSFLKSEFGLV. Residues 186 to 207 form a helical membrane-spanning segment; sequence WHEIVNYICQVIFWINFLIVIV. At 208-233 the chain is on the cytoplasmic side; the sequence is CYTLITKELYRSYVRTRGVGKVPRKK. The helical transmembrane segment at 234-259 threads the bilayer; it reads VNVKVFIIIAVFFICFVPFHFARIPY. Residues 256–259, glutamine 263, and lysine 280 each bind ADP; that span reads RIPY. At 260-278 the chain is on the extracellular side; that stretch reads TLSQTRDVFDCTAENTLFY. The chain crosses the membrane as a helical span at residues 279 to 298; that stretch reads VKESTLWLTSLNACLDPFIY. Residues 299–342 lie on the Cytoplasmic side of the membrane; the sequence is FFLCKSFRNSLISMLKCPNSATSLSQDNRKKEQDGGDPNEETPM. The tract at residues 319 to 342 is disordered; the sequence is ATSLSQDNRKKEQDGGDPNEETPM. Acidic residues predominate over residues 333–342; that stretch reads GGDPNEETPM.

This sequence belongs to the G-protein coupled receptor 1 family. Highly expressed in the platelets, lower levels in the brain. Lowest levels in the lung, appendix, pituitary and adrenal gland. Expressed in the spinal cord and in the fetal brain.

It localises to the cell membrane. In terms of biological role, receptor for ADP and ATP coupled to G-proteins that inhibit the adenylyl cyclase second messenger system. Not activated by UDP and UTP. Required for normal platelet aggregation and blood coagulation. The sequence is that of P2Y purinoceptor 12 (P2RY12) from Homo sapiens (Human).